The chain runs to 580 residues: Viral transcription factor IE2 (580 aa).

Basic and acidic residues predominate over residues Met-1–Pro-11. Disordered regions lie at residues Met-1–Thr-30 and Asp-99–Lys-161. Polar residues predominate over residues Asp-99–Pro-133. Residues Lys-175 and Lys-180 each participate in a glycyl lysine isopeptide (Lys-Gly) (interchain with G-Cter in SUMO) cross-link. Positions Cys-199 to Ile-202 match the SUMO-interacting motif 1/SIM1 motif. Positions Ile-200–Glu-208 are non-covalent SUMO1 binding region (SIM). Ser-203 and Ser-205 each carry phosphoserine. The interval Glu-206–Glu-336 is disordered. Low complexity-rich tracts occupy residues Arg-216–Thr-236, Ser-259–Asp-271, and Ala-302–Gly-317. The SUMO-interacting motif 1/SIM2 signature appears at Ile-410–Ile-413. The short motif at Val-501–Leu-504 is the SUMO-interacting motif 1/SIM3 element.

It belongs to the HHV-5 IE2 protein family. Interacts with host SUMO-modified form of TATA-binding protein (TBP)-associated factor 12/TAF12 in a SIM-dependent manner; this interaction increases the transactivation activity of IE2. Interacts with host CHAF1A. Interacts with several components of the host transcriptional machinery including TBP, TF2B and CREB1. Interacts with host DNA replication licensing factor MCM3. Interacts with host PLSCR1; this interaction inhibits IE2 transactivating activity. In terms of processing, phosphorylated by host CK2 at Ser-203 and Ser-205; leading to enhanced SUMOylation. SUMOylated; SUMOylation is enhanced when IE2 is phosphorylated by host CK2. The sumoylation is necessary for efficient replication of the virus and thus for the function of this viral transcription factor.

The protein resides in the host nucleus. Its function is as follows. Stimulates viral early and late gene expression and thus play a crucial role in the regulation of productive infection. Selectively drives host RNA Pol II transcription initiation at a subset of viral early-late and late promoters without substantially affecting Pol II transcription of expressed host genes. Mechanistically, forms a repressive complex at the major immediate-early promoter region involving direct association with host nucleosomes and TBP. Concerning activation, stimulates transcription by binding nearby, but not within, core promoter regions. In addition, activates quiescent cells to reenter the cell cycle and up-regulates several E2F-responsive genes, which are responsible for pushing the cell into S phase. In S-phase, inhibits cellular DNA synthesis and blocks further cell cycle progression. The polypeptide is Viral transcription factor IE2 (UL122) (Homo sapiens (Human)).